The following is a 501-amino-acid chain: NADH-quinone oxidoreductase subunit N (501 aa).

14 helical membrane passes run His4–Val24, Phe34–Leu54, Leu80–Gly100, Gly112–Gly132, Leu134–Phe154, Leu167–Met187, Pro207–Phe227, Pro241–Tyr261, Leu278–Ala298, Val314–Leu334, His335–Trp355, Met376–Phe396, Gly409–Phe429, and Pro463–Phe483.

This sequence belongs to the complex I subunit 2 family. As to quaternary structure, NDH-1 is composed of 14 different subunits. Subunits NuoA, H, J, K, L, M, N constitute the membrane sector of the complex.

The protein localises to the cell membrane. It carries out the reaction a quinone + NADH + 5 H(+)(in) = a quinol + NAD(+) + 4 H(+)(out). Functionally, NDH-1 shuttles electrons from NADH, via FMN and iron-sulfur (Fe-S) centers, to quinones in the respiratory chain. The immediate electron acceptor for the enzyme in this species is believed to be a menaquinone. Couples the redox reaction to proton translocation (for every two electrons transferred, four hydrogen ions are translocated across the cytoplasmic membrane), and thus conserves the redox energy in a proton gradient. This is NADH-quinone oxidoreductase subunit N from Desulforudis audaxviator (strain MP104C).